Reading from the N-terminus, the 448-residue chain is Antizyme inhibitor 1 (448 aa).

The protein belongs to the Orn/Lys/Arg decarboxylase class-II family. ODC antizyme inhibitor subfamily. As to quaternary structure, monomer. Interacts with OAZ1 and OAZ3; this interaction disrupts the interaction between the antizyme and ODC1. Post-translationally, ubiquitinated, leading to its proteasomal degradation; a process that is reduced in presence of antizyme OAZ1.

It localises to the nucleus. In terms of biological role, antizyme inhibitor (AZI) protein that positively regulates ornithine decarboxylase (ODC) activity and polyamine uptake. AZI is an enzymatically inactive ODC homolog that counteracts the negative effect of ODC antizymes (AZs) OAZ1, OAZ2 and OAZ3 on ODC activity by competing with ODC for antizyme-binding. Inhibits antizyme-dependent ODC degradation and releases ODC monomers from their inactive complex with antizymes, leading to formation of the catalytically active ODC homodimer and restoring polyamine production. The chain is Antizyme inhibitor 1 (AZIN1) from Pongo abelii (Sumatran orangutan).